We begin with the raw amino-acid sequence, 748 residues long: Polyribonucleotide nucleotidyltransferase (748 aa).

Residues Asp-484 and Asp-490 each contribute to the Mg(2+) site. The KH domain occupies 551 to 610; that stretch reads PRIETMSVPKDKIRDVIGTGGKVIREIVATTGAKVDIEDDGTVRLSSSDPANIEAAREWI. The S1 motif domain occupies 620 to 688; sequence GKIYNGKVVN…NRGKVRLSMR (69 aa). The interval 693–748 is disordered; the sequence is ETGAELDDNRPPRENAERRGGERPRRDRGPRRESGDRPARRDMEPEFAPAFLRKDS. Positions 699–736 are enriched in basic and acidic residues; that stretch reads DDNRPPRENAERRGGERPRRDRGPRRESGDRPARRDME.

Belongs to the polyribonucleotide nucleotidyltransferase family. Mg(2+) is required as a cofactor.

It is found in the cytoplasm. The enzyme catalyses RNA(n+1) + phosphate = RNA(n) + a ribonucleoside 5'-diphosphate. In terms of biological role, involved in mRNA degradation. Catalyzes the phosphorolysis of single-stranded polyribonucleotides processively in the 3'- to 5'-direction. This is Polyribonucleotide nucleotidyltransferase from Zymomonas mobilis subsp. mobilis (strain ATCC 31821 / ZM4 / CP4).